Reading from the N-terminus, the 198-residue chain is Synaptobrevin homolog YKT6-B (198 aa).

Residues 8–127 (VLYKGENKVH…IQYNALDSYL (120 aa)) form the Longin domain. One can recognise a v-SNARE coiled-coil homology domain in the interval 138 to 198 (PMSKVQAELD…RKQNSCCDIM (61 aa)). A lipid anchor (S-palmitoyl cysteine) is attached at Cys194. The residue at position 195 (Cys195) is a Cysteine methyl ester. A lipid anchor (S-farnesyl cysteine) is attached at Cys195. Positions 196 to 198 (DIM) are cleaved as a propeptide — removed in mature form.

The protein belongs to the synaptobrevin family. In terms of processing, palmitoylated; catalyzes its own palmitoylation. Palmitoylation is required for Golgi targeting. Post-translationally, farnesylation is required for Golgi targeting.

The protein resides in the cytoplasm. Its subcellular location is the cytosol. It is found in the cytoplasmic vesicle membrane. It localises to the golgi apparatus membrane. Functionally, vesicular soluble NSF attachment protein receptor (v-SNARE) mediating vesicle docking and fusion to a specific acceptor cellular compartment. Functions in endoplasmic reticulum to Golgi transport; as part of a SNARE complex composed of GOSR1, GOSR2 and STX5. Functions in early/recycling endosome to TGN transport; as part of a SNARE complex composed of BET1L, GOSR1 and STX5. Has a S-palmitoyl transferase activity. The polypeptide is Synaptobrevin homolog YKT6-B (ykt6-b) (Xenopus laevis (African clawed frog)).